The chain runs to 463 residues: MESLKIYNTLAREKQTFVPIEPGRVRMYVCGMTVYDYCHVGHARVMVVFDMVQRWLRAAGYDVTYVRNITDIDDKIIKRAVENGETMSALTGRFIAAMHEDADALGVQRPDHEPRATEYVPQMLSMIGRLQTNGLAYQATDGDVNYAVRKFPGYGKLSGKSLEDLRAGERVAANDAKQDPLDFVLWKSAKADEPAESRWASPWGEGRPGWHIECSAMSCELLGEHFDLHGGGADLQFPHHENEIAQSEGATGKTFVNMWMHNGFVRVNDEKMSKSLGNFFTIRDVLKVYDAEVVRFFILRSHYRSDLNYSDAHLDDARHALTRLYTALKDVPAAVGAKPDWSESHGKRFLEAMNDDFNTPVAVSVLFELASEVNKTRSPELASQLAALAGVIGLLGRDPHVFLQGGVSADGVDAAEVEARIEERRAAKAARDFARADAIRADLLAAGIVLEDKPGGLTEWRRA.

Position 30 (C30) interacts with Zn(2+). The short motif at 32-42 (MTVYDYCHVGH) is the 'HIGH' region element. Zn(2+) is bound by residues C214, H239, and E243. Positions 271-275 (KMSKS) match the 'KMSKS' region motif. K274 contacts ATP.

The protein belongs to the class-I aminoacyl-tRNA synthetase family. As to quaternary structure, monomer. The cofactor is Zn(2+).

It localises to the cytoplasm. The catalysed reaction is tRNA(Cys) + L-cysteine + ATP = L-cysteinyl-tRNA(Cys) + AMP + diphosphate. The sequence is that of Cysteine--tRNA ligase from Ralstonia pickettii (strain 12J).